A 276-amino-acid polypeptide reads, in one-letter code: MATLATKKATLVAALKDLQRVTVAFSGGIDSTLVLKMALDVLGRDNVTAVVANSELFTDEEFDKAMSLAEELGANVQGTTLDYLSDDHIKNNTPDSWYYAKKMFYSRLNDIAANNGSAAVLDGMIKNDENDYRPGLKARSEAGARSLLQEADFFKTDVRALAQELGLTNWNKVASCSVSSRFPYGTTLTHDNIAQVMAAEKYLRSLGFPTVRVRFHNDIARIELPEARIGDFLVFNDRVNRQLQSLGFRYVTLDLGGFRSGRMNDTLTKAQLATFA.

The Nucleophile and sulfur donor role is filled by C176. The residue at position 176 (C176) is a 2,3-didehydroalanine (Cys).

Belongs to the LarE family.

The enzyme catalyses pyridinium-3,5-dicarboxylate mononucleotide + [LarE protein]-L-cysteine + ATP = [LarE protein]-dehydroalanine + pyridinium-3-carboxylate-5-thiocarboxylate mononucleotide + AMP + diphosphate + H(+). It carries out the reaction [LarE protein]-L-cysteine + pyridinium-3-carboxylate-5-thiocarboxylate mononucleotide + ATP = pyridinium-3,5-bisthiocarboxylate mononucleotide + [LarE protein]-dehydroalanine + AMP + diphosphate + H(+). Its function is as follows. Involved in the biosynthesis of a nickel-pincer cofactor ((SCS)Ni(II) pincer complex). Catalyzes the ATP-dependent incorporation of two sulfur atoms in pyridinium-3,5-biscarboxylic acid mononucleotide (P2CMN) to yield pyridinium-3,5-bisthiocarboxylic acid mononucleotide (P2TMN). The source of sulfur is the enzyme itself: Cys-176 of LarE is the sulfur donor, thereby being converted into dehydroalanine, and is not regenerated in vivo. Thus, two molecules of LarE undergo sacrificial sulfur transfer to create one P2TMN. Binds nickel. Is required for the activation of the lactate racemase LarA. May also be involved in the activation of other nickel-pincer cofactor-dependent enzymes. This Lactiplantibacillus plantarum (strain ATCC BAA-793 / NCIMB 8826 / WCFS1) (Lactobacillus plantarum) protein is Pyridinium-3,5-bisthiocarboxylic acid mononucleotide synthase.